A 384-amino-acid polypeptide reads, in one-letter code: uncharacterized protein (384 aa).

12 helical membrane passes run 22-42 (LAFF…PFAK), 52-72 (LGLL…LTGV), 81-101 (AVIL…VLMN), 106-126 (MAIA…AMNI), 143-163 (FHGL…ALLW), 164-184 (LGLN…ILLL), 202-222 (LFVF…VMFL), 240-260 (GMSP…MTLG), 276-296 (VLLG…SIDS), 299-319 (AAII…PILF), 327-347 (VMPA…GILA), and 352-372 (IGFI…ALLL).

This sequence belongs to the major facilitator superfamily.

It localises to the membrane. This is an uncharacterized protein from Yersinia pestis.